The sequence spans 347 residues: S-adenosylmethionine:tRNA ribosyltransferase-isomerase (347 aa).

The protein belongs to the QueA family. In terms of assembly, monomer.

It is found in the cytoplasm. The catalysed reaction is 7-aminomethyl-7-carbaguanosine(34) in tRNA + S-adenosyl-L-methionine = epoxyqueuosine(34) in tRNA + adenine + L-methionine + 2 H(+). Its pathway is tRNA modification; tRNA-queuosine biosynthesis. Transfers and isomerizes the ribose moiety from AdoMet to the 7-aminomethyl group of 7-deazaguanine (preQ1-tRNA) to give epoxyqueuosine (oQ-tRNA). The sequence is that of S-adenosylmethionine:tRNA ribosyltransferase-isomerase from Streptococcus thermophilus (strain ATCC BAA-491 / LMD-9).